The primary structure comprises 626 residues: MARTAPAASFESLESDLDQKFAYPASSKTYLTGSRPDIRVPLRTILQTSTRTDKGEMQNPPIPVYDTSGPYSDPDVHIDLKAGLPAVRAKWIEERGDTEVLPGLSSEYGRDRANDPATAHLRFAQLTNPRRAKAGANVSQMHYARKGIITPEMEYVALRESLNLQALYDKPDYKALLRQHPGNALGAGLPLRPEDITPEFVRQEIASGRAIIPANINHTELEPMAIGRNFRVKINGNLGNSAVTSSLAEEVEKMVWSIRWGADTIMDLSTGKHIHETREWILRNSPVPIGTVPIYQALDKTGGIAEDLTWEMFRDTLIEQAEQGVDYFTIHAGVLLRYVPLTADRVTGIVSRGGSIMAKWCLAHHKENFLYTHFDEICEIMKAYDVSFSLGDGLRPGCIADSNDDAQFGELRTLGELTAKAWKHDVQVMIEGPGHVPLQRIQANMDEELKHCYEAPFYTLGPLVTDIAPGYDHITSGIGAANIGWMGTAMLCYVTPKEHLGLPDKEDVREGIITYKIAAHAADLAKGWPGAQLRDNALSKARFEFRWEDQFNLGLDPERARSYHDATLPAEGAKIAHFCSMCGPKFCSMKITQEVRDYAASLPKEAQQGMEEKSIEFLKKGSKIYS.

Residues N237, M266, Y295, H331, 351–353 (SRG), 392–395 (DGLR), and E431 contribute to the substrate site. Residue H435 participates in Zn(2+) binding. Y458 contacts substrate. H499 contributes to the Zn(2+) binding site. Positions 579, 582, and 587 each coordinate [4Fe-4S] cluster.

Belongs to the ThiC family. As to quaternary structure, homodimer. [4Fe-4S] cluster is required as a cofactor.

The enzyme catalyses 5-amino-1-(5-phospho-beta-D-ribosyl)imidazole + S-adenosyl-L-methionine = 4-amino-2-methyl-5-(phosphooxymethyl)pyrimidine + CO + 5'-deoxyadenosine + formate + L-methionine + 3 H(+). It participates in cofactor biosynthesis; thiamine diphosphate biosynthesis. Functionally, catalyzes the synthesis of the hydroxymethylpyrimidine phosphate (HMP-P) moiety of thiamine from aminoimidazole ribotide (AIR) in a radical S-adenosyl-L-methionine (SAM)-dependent reaction. The chain is Phosphomethylpyrimidine synthase from Cupriavidus necator (strain ATCC 17699 / DSM 428 / KCTC 22496 / NCIMB 10442 / H16 / Stanier 337) (Ralstonia eutropha).